The sequence spans 475 residues: ADP-ribosyltransferase toxin AexT (475 aa).

The 134-residue stretch at 93 to 226 (VSPEDLQRLM…LQRAVKAEVA (134 aa)) folds into the Bacterial Rho-GAP domain. The TR mART core domain occupies 260 to 436 (EGLQEQFGLE…RVLEEASLGE (177 aa)). Catalysis depends on residues R340, S364, and E403.

Its subcellular location is the secreted. Functionally, directly involved in the toxicity for RTG-2 (rainbow trout gonad) fish cells. The protein is ADP-ribosyltransferase toxin AexT (aexT) of Aeromonas salmonicida.